The following is a 206-amino-acid chain: Large ribosomal subunit protein uL4 (206 aa).

The disordered stretch occupies residues G46 to S78. Positions H58–G70 are enriched in basic residues.

Belongs to the universal ribosomal protein uL4 family. In terms of assembly, part of the 50S ribosomal subunit.

In terms of biological role, one of the primary rRNA binding proteins, this protein initially binds near the 5'-end of the 23S rRNA. It is important during the early stages of 50S assembly. It makes multiple contacts with different domains of the 23S rRNA in the assembled 50S subunit and ribosome. Forms part of the polypeptide exit tunnel. This is Large ribosomal subunit protein uL4 from Burkholderia cenocepacia (strain ATCC BAA-245 / DSM 16553 / LMG 16656 / NCTC 13227 / J2315 / CF5610) (Burkholderia cepacia (strain J2315)).